The sequence spans 91 residues: Large ribosomal subunit protein uL23 (91 aa).

The protein belongs to the universal ribosomal protein uL23 family. Part of the 50S ribosomal subunit. Contacts protein L29, and trigger factor when it is bound to the ribosome.

Functionally, one of the early assembly proteins it binds 23S rRNA. One of the proteins that surrounds the polypeptide exit tunnel on the outside of the ribosome. Forms the main docking site for trigger factor binding to the ribosome. This is Large ribosomal subunit protein uL23 from Staphylococcus epidermidis (strain ATCC 35984 / DSM 28319 / BCRC 17069 / CCUG 31568 / BM 3577 / RP62A).